A 1128-amino-acid polypeptide reads, in one-letter code: Cordon-bleu protein-like 1 (1128 aa).

Residues 1-35 (MDGRTPRPQDAPARRKPKAKAPLPPAETKYTDVSS) are disordered. Phosphothreonine is present on Thr139. 3 positions are modified to phosphoserine: Ser204, Ser222, and Ser256. 3 disordered regions span residues 249–309 (KKRD…VPQD), 325–441 (MSVD…SPKS), and 454–499 (TLKN…TSNG). Thr260 carries the phosphothreonine modification. The span at 270-286 (FTRSNTISKPYISNTLP) shows a compositional bias: polar residues. Ser273 bears the Phosphoserine mark. At Thr284 the chain carries Phosphothreonine. The short motif at 291–296 (KKRRAP) is the KKRRAP 1 element. Phosphoserine occurs at positions 326, 333, 344, and 356. Residues 345-357 (LQLSSMSAGNSSL) show a composition bias toward polar residues. The short motif at 360-365 (TKRKAP) is the KKRRAP 2 element. Residues 397-415 (SEANSPEELSSPAGISSDY) show a composition bias toward polar residues. Acidic residues predominate over residues 416–425 (SLEEIDEKEE). Ser438, Ser441, Ser461, Ser471, and Ser474 each carry phosphoserine. Residues 475–488 (MEEKQETKSTDGQE) show a composition bias toward basic and acidic residues. 6 positions are modified to phosphoserine: Ser563, Ser584, Ser786, Ser813, Ser814, and Ser821. Disordered regions lie at residues 780–840 (TEDS…PFAP), 882–964 (SAAA…SQVS), 995–1081 (RSQS…PEQM), and 1103–1128 (IPSN…QDGH). Over residues 899 to 908 (LTNKEAERDM) the composition is skewed to basic and acidic residues. 5 positions are modified to phosphoserine: Ser911, Ser917, Ser947, Ser1069, and Ser1070. 2 stretches are compositionally biased toward polar residues: residues 1045–1081 (SAHN…PEQM) and 1103–1122 (IPSN…SMSP). Residues 1081–1101 (MRQSLLTAIRSGEAAAKLKRV) form the WH2 domain. Residue Ser1121 is modified to Phosphoserine.

This is Cordon-bleu protein-like 1 from Homo sapiens (Human).